Here is a 186-residue protein sequence, read N- to C-terminus: Probable GTP-binding protein EngB (186 aa).

One can recognise an EngB-type G domain in the interval 18 to 186 (SKKEVCLIGR…LMLKIIDVIS (169 aa)). GTP contacts are provided by residues 26-33 (GRSNVGKS), 52-56 (GRTVT), 69-72 (DLPG), 135-138 (NKID), and 166-168 (ISA). Mg(2+)-binding residues include Ser33 and Thr54.

It belongs to the TRAFAC class TrmE-Era-EngA-EngB-Septin-like GTPase superfamily. EngB GTPase family. It depends on Mg(2+) as a cofactor.

In terms of biological role, necessary for normal cell division and for the maintenance of normal septation. The sequence is that of Probable GTP-binding protein EngB from Mycoplasmoides gallisepticum (strain R(low / passage 15 / clone 2)) (Mycoplasma gallisepticum).